The following is a 205-amino-acid chain: Bcl2-associated agonist of cell death (205 aa).

Residues 1–139 (MGTPKQPSLA…PFRGRSRSAP (139 aa)) are disordered. Phosphoserine is present on Ser67. Positions 85–98 (IVQQQPGQAANNSH) are enriched in polar residues. Position 113 is a phosphoserine (Ser113). Residues 118–128 (TEEDEGMEEEL) are compositionally biased toward acidic residues. Ser129 bears the Phosphoserine mark. Residues Arg132 and Arg134 each carry the asymmetric dimethylarginine; by PRMT1 modification. Phosphoserine is present on Ser135. A Phosphoserine; by PKA, PKB, PAK1, RPS6KA1, RPS6KB1 and PKC/PRKCQ modification is found at Ser137. A BH3 motif is present at residues 148–162 (YGRELRRMSDEFEGS). Residues Ser156 and Ser171 each carry the phosphoserine modification. The disordered stretch occupies residues 161 to 180 (GSFKGLPRPKSAGTATQMRQ).

This sequence belongs to the Bcl-2 family. As to quaternary structure, forms heterodimers with the anti-apoptotic proteins, Bcl-X(L), Bcl-2 and Bcl-W. Also binds protein S100A10. The Ser-113/Ser-137 phosphorylated form binds 14-3-3 proteins. Interacts with AKT1 and PIM3. Interacts with HIF3A (via C-terminus domain); the interaction reduces the binding between BAD and BAX. Interacts (via BH3 domain) with NOL3 (via CARD domain); preventing the association of BAD with BCL2. Interacts with GIMAP3/IAN4 and GIMAP5/IAN5. In terms of processing, phosphorylated at one or more of Ser-113, Ser-137, Ser-156 and Ser-171 in response to survival stimuli, which blocks its pro-apoptotic activity. Phosphorylation on Ser-137 or Ser-113 promotes heterodimerization with 14-3-3 proteins. This interaction then facilitates the phosphorylation at Ser-156, a site within the BH3 motif, leading to the release of Bcl-X(L) and the promotion of cell survival. Ser-137 is the major site of AKT/PKB phosphorylation, Ser-156 the major site of protein kinase A (CAPK) phosphorylation. Methylation at Arg-132 and Arg-134 by PRMT1 inhibits Akt-mediated phosphorylation at Ser-137. As to expression, expressed in all tissues tested, including brain, liver, spleen and heart. In the brain, restricted to epithelial cells of the choroid plexus. Isoform alpha is the more abundant form.

The protein localises to the mitochondrion outer membrane. It is found in the cytoplasm. In terms of biological role, promotes cell death. Successfully competes for the binding to Bcl-X(L), Bcl-2 and Bcl-W, thereby affecting the level of heterodimerization of these proteins with BAX. Can reverse the death repressor activity of Bcl-X(L), but not that of Bcl-2. Appears to act as a link between growth factor receptor signaling and the apoptotic pathways. The chain is Bcl2-associated agonist of cell death (Bad) from Rattus norvegicus (Rat).